The primary structure comprises 399 residues: Bombesin receptor subtype-3 (399 aa).

Residues 1–41 (MSQKQPQSPNQTLISITNDTESSSSVVSNDTTNKGWTGDNS) are Extracellular-facing. N-linked (GlcNAc...) asparagine glycans are attached at residues Asn10 and Asn18. The helical transmembrane segment at 42–63 (PGIEALCAIYITYAVIISVGIL) threads the bilayer. The Cytoplasmic portion of the chain corresponds to 64-82 (GNAILIKVFFKTKSMQTVP). Residues 83 to 103 (NIFITSLALGDLLLLLTCVPV) form a helical membrane-spanning segment. Residues 104–121 (DATHYLAEGWLFGRIGCK) are Extracellular-facing. Residues Cys120 and Cys203 are joined by a disulfide bond. The chain crosses the membrane as a helical span at residues 122–143 (VLSFIRLTSVGVSVFTLTILSA). The Cytoplasmic portion of the chain corresponds to 144 to 163 (DRYKAVVKPLERQPSNAILK). The helical transmembrane segment at 164-184 (TCAKAGCIWIMSMIFALPEAI) threads the bilayer. Over 185 to 220 (FSNVHTLRDPNKNMTSEWCAFYPVSEKLLQEIHALL) the chain is Extracellular. A helical membrane pass occupies residues 221 to 241 (SFLVFYIIPLSIISVYYSLIA). Residues 242–272 (RTLYKSTLNIPTEEQSHARKQVESRKRIAKT) are Cytoplasmic-facing. A helical membrane pass occupies residues 273–293 (VLVLVALFALCWLPNHLLNLY). Over 294–313 (HSFTHKAYEDSSAIHFIVTI) the chain is Extracellular. Residues 314–333 (FSRVLAFSNSCVNPFALYWL) traverse the membrane as a helical segment. The Cytoplasmic segment spans residues 334–399 (SKTFQKQFKA…RPMKKEENRV (66 aa)). A lipid anchor (S-palmitoyl cysteine) is attached at Cys347.

The protein belongs to the G-protein coupled receptor 1 family. As to quaternary structure, interacts with C6orf89. As to expression, mainly in uteri of pregnant animals.

The protein resides in the cell membrane. Functionally, role in sperm cell division, maturation, or function. The relative order of ligand affinity is GRP = neuromedin-C &gt;&gt; neuromedin-B. This receptor mediates its action by association with G proteins that activate a phosphatidylinositol-calcium second messenger system. The polypeptide is Bombesin receptor subtype-3 (BRS3) (Cavia porcellus (Guinea pig)).